A 294-amino-acid polypeptide reads, in one-letter code: Acetylglutamate kinase (294 aa).

Substrate is bound by residues 67–68, arginine 89, and asparagine 191; that span reads GG.

This sequence belongs to the acetylglutamate kinase family. ArgB subfamily.

The protein resides in the cytoplasm. The enzyme catalyses N-acetyl-L-glutamate + ATP = N-acetyl-L-glutamyl 5-phosphate + ADP. It functions in the pathway amino-acid biosynthesis; L-arginine biosynthesis; N(2)-acetyl-L-ornithine from L-glutamate: step 2/4. In terms of biological role, catalyzes the ATP-dependent phosphorylation of N-acetyl-L-glutamate. The protein is Acetylglutamate kinase of Methylobacillus flagellatus (strain ATCC 51484 / DSM 6875 / VKM B-1610 / KT).